The primary structure comprises 600 residues: Terpenoid synthase 8 (600 aa).

The Mg(2+) site is built by aspartate 352, aspartate 356, asparagine 497, and aspartate 505. A DDXXD motif motif is present at residues 352 to 356 (DDTCD).

This sequence belongs to the terpene synthase family. Tpsa subfamily. Mg(2+) is required as a cofactor. It depends on Mn(2+) as a cofactor. In terms of tissue distribution, stele, and tips of primary and secondary root.

It localises to the plastid. It carries out the reaction (2E,6E,10E)-geranylgeranyl diphosphate = rhizathalene A + diphosphate. The protein operates within secondary metabolite biosynthesis; terpenoid biosynthesis. Its function is as follows. Catalyzes the synthesis of the semivolatile diterpene rhizatalene A. This Arabidopsis thaliana (Mouse-ear cress) protein is Terpenoid synthase 8 (TPS08).